The following is a 383-amino-acid chain: Putative glutamate--cysteine ligase 2-2 (383 aa).

The protein belongs to the glutamate--cysteine ligase type 2 family. YbdK subfamily.

It carries out the reaction L-cysteine + L-glutamate + ATP = gamma-L-glutamyl-L-cysteine + ADP + phosphate + H(+). Functionally, ATP-dependent carboxylate-amine ligase which exhibits weak glutamate--cysteine ligase activity. The chain is Putative glutamate--cysteine ligase 2-2 from Legionella pneumophila (strain Paris).